Reading from the N-terminus, the 85-residue chain is MLAGMPSLSHEEQQEAVERIHKFMSEGMSSGEAIALVAAEIRERHQNDPQAMAIFEDHDFDEHTESDYRRDDEPDADDIEDLYEG.

Basic and acidic residues predominate over residues aspartate 57 to aspartate 72. A disordered region spans residues aspartate 57–glycine 85. The segment covering glutamate 73–glycine 85 has biased composition (acidic residues).

The protein belongs to the UPF0181 family.

This chain is UPF0181 protein YPTS_1774, found in Yersinia pseudotuberculosis serotype IB (strain PB1/+).